The chain runs to 248 residues: DNA repair protein RecO (248 aa).

Belongs to the RecO family.

Functionally, involved in DNA repair and RecF pathway recombination. The protein is DNA repair protein RecO of Bacillus mycoides (strain KBAB4) (Bacillus weihenstephanensis).